Consider the following 545-residue polypeptide: ATP synthase subunit alpha (545 aa).

173–180 (GDRQTGKT) lines the ATP pocket.

The protein belongs to the ATPase alpha/beta chains family. F-type ATPases have 2 components, CF(1) - the catalytic core - and CF(0) - the membrane proton channel. CF(1) has five subunits: alpha(3), beta(3), gamma(1), delta(1), epsilon(1). CF(0) has three main subunits: a(1), b(2) and c(9-12). The alpha and beta chains form an alternating ring which encloses part of the gamma chain. CF(1) is attached to CF(0) by a central stalk formed by the gamma and epsilon chains, while a peripheral stalk is formed by the delta and b chains.

The protein resides in the cell membrane. It carries out the reaction ATP + H2O + 4 H(+)(in) = ADP + phosphate + 5 H(+)(out). In terms of biological role, produces ATP from ADP in the presence of a proton gradient across the membrane. The alpha chain is a regulatory subunit. In Clavibacter sepedonicus (Clavibacter michiganensis subsp. sepedonicus), this protein is ATP synthase subunit alpha.